A 274-amino-acid chain; its full sequence is Nickel/cobalt efflux system RcnA (274 aa).

The Periplasmic segment spans residues 1–12; it reads MTEFTTLLQQGN. The helical transmembrane segment at 13 to 33 threads the bilayer; that stretch reads AWFFIPSAILLGALHGLEPGH. At 34-56 the chain is on the cytoplasmic side; it reads SKTMMAAFIIAIKGTIKQAVMLG. Residues 57–77 form a helical membrane-spanning segment; sequence LAATISHTAVVWLIAFGGMVI. Topologically, residues 78-86 are periplasmic; the sequence is SKRFTAQSA. Residues 87–107 traverse the membrane as a helical segment; sequence EPWLQLISAVIIISTAFWMFW. Over 108 to 174 the chain is Cytoplasmic; it reads RTWRGERNWL…FDGREVTNWQ (67 aa). Positions 127-137 are enriched in basic and acidic residues; the sequence is HHHHDHEDHHD. Positions 127–153 are disordered; that stretch reads HHHHDHEDHHDHGHHHHHEHGEYQDAH. The chain crosses the membrane as a helical span at residues 175 to 195; that stretch reads ILLFGLTGGLIPCPAAITVLL. The Periplasmic segment spans residues 196–209; that stretch reads ICIQLKALTLGATL. A helical transmembrane segment spans residues 210–230; the sequence is VVSFSLGLALTLVTVSVGAAI. The Cytoplasmic segment spans residues 231 to 251; the sequence is SVQQVAKRWSGFNTLAKRAPY. The chain crosses the membrane as a helical span at residues 252–272; the sequence is FSSLLIGLVGVYMGVHGFMGI. Residues 273–274 are Periplasmic-facing; it reads MR.

This sequence belongs to the NiCoT transporter (TC 2.A.52) family. RcnA subfamily.

The protein localises to the cell inner membrane. Functionally, efflux system for nickel and cobalt. This Escherichia coli O6:K15:H31 (strain 536 / UPEC) protein is Nickel/cobalt efflux system RcnA (rcnA).